The chain runs to 207 residues: MKAMRYEQISENAFKGKIQVYLEQILGDASLILKTLHEKDQCLLCELDDLGHVFQDMQGIASSFYLQSYIEEFTPAFIELAKAIKALSEHKHGALIVIERADPVERFIQKGTSLHAEISSSLIESIFFPGNPLHDGALLVRENKLVSAANVLPLTTKEVDIHLGTRHRAALGMSGYTDALVLVVSEETGKMSFAKDGVLYPLISPRT.

Residues 13–37 (AFKGKIQVYLEQILGDASLILKTLH) adopt a coiled-coil conformation. The region spanning 63 to 205 (SFYLQSYIEE…DGVLYPLISP (143 aa)) is the DAC domain.

The protein belongs to the adenylate cyclase family. DacB/CdaS subfamily. In terms of assembly, forms dimers and probably also hexamers; the dimer may be active while the hexamer may not be active.

It carries out the reaction 2 ATP = 3',3'-c-di-AMP + 2 diphosphate. Its function is as follows. One of 3 paralogous diadenylate cyclases (DAC) in this bacteria, catalyzing the condensation of 2 ATP molecules into cyclic di-AMP (c-di-AMP). Upon expression in E.coli leads to c-di-AMP synthesis. Overexpression of the hyperactive mutant (L44F) in the absence of c-di-AMP phosphodiesterase GdpP leads to growth defects in log phase (long curly cell filaments) that disappear upon sporulation; spore formation is normal, showing sporulation is insensitive to the excess c-di-AMP. In B.subtilis c-di-AMP is a second messenger that mediates growth, DNA repair and cell wall homeostasis; it is toxic when present in excess. This is Cyclic di-AMP synthase CdaS from Bacillus subtilis (strain 168).